The chain runs to 271 residues: Bifunctional protein FolD (271 aa).

NADP(+) contacts are provided by residues 154–156 (GRS), Thr-181, and Ile-222.

Belongs to the tetrahydrofolate dehydrogenase/cyclohydrolase family. In terms of assembly, homodimer.

It carries out the reaction (6R)-5,10-methylene-5,6,7,8-tetrahydrofolate + NADP(+) = (6R)-5,10-methenyltetrahydrofolate + NADPH. The catalysed reaction is (6R)-5,10-methenyltetrahydrofolate + H2O = (6R)-10-formyltetrahydrofolate + H(+). It functions in the pathway one-carbon metabolism; tetrahydrofolate interconversion. Its function is as follows. Catalyzes the oxidation of 5,10-methylenetetrahydrofolate to 5,10-methenyltetrahydrofolate and then the hydrolysis of 5,10-methenyltetrahydrofolate to 10-formyltetrahydrofolate. This is Bifunctional protein FolD from Thermosipho melanesiensis (strain DSM 12029 / CIP 104789 / BI429).